Reading from the N-terminus, the 311-residue chain is Porphobilinogen deaminase (311 aa).

Residue C243 is modified to S-(dipyrrolylmethanemethyl)cysteine.

It belongs to the HMBS family. In terms of assembly, monomer. Requires dipyrromethane as cofactor.

It carries out the reaction 4 porphobilinogen + H2O = hydroxymethylbilane + 4 NH4(+). It participates in porphyrin-containing compound metabolism; protoporphyrin-IX biosynthesis; coproporphyrinogen-III from 5-aminolevulinate: step 2/4. Tetrapolymerization of the monopyrrole PBG into the hydroxymethylbilane pre-uroporphyrinogen in several discrete steps. In Aliivibrio salmonicida (strain LFI1238) (Vibrio salmonicida (strain LFI1238)), this protein is Porphobilinogen deaminase.